We begin with the raw amino-acid sequence, 1188 residues long: Zinc finger SWIM domain-containing protein 5 (1188 aa).

A compositionally biased stretch (basic and acidic residues) spans 1–10 (MAEGGEREEL). 2 disordered regions span residues 1–46 (MAEG…GAGG) and 123–171 (AGAA…TGTA). Composition is skewed to low complexity over residues 126–136 (AAGAAGASPVE) and 146–155 (AAPAGSAPGA). Positions 156-171 (AGAGSSPGLGAGTGTA) are enriched in gly residues. An SWIM-type zinc finger spans residues 222–259 (YKVAISFDRCKITSVSCGCGNKDIFYCAHVVALSLYRI).

This Mus musculus (Mouse) protein is Zinc finger SWIM domain-containing protein 5 (Zswim5).